A 150-amino-acid polypeptide reads, in one-letter code: Galactose-binding lectin (150 aa).

H16 and G19 together coordinate D-galactose. N26 is a glycosylation site (N-linked (GlcNAc...) asparagine). D-galactose-binding positions include N27, 35–37 (DIH), H64, and G67. The N-linked (GlcNAc...) asparagine glycan is linked to N74. D-galactose is bound by residues E75, 83–85 (DRH), H108, and G111. N118 carries N-linked (GlcNAc...) asparagine glycosylation. D-galactose contacts are provided by residues N119 and 127–129 (DKH).

As to quaternary structure, monomer in solution. Homodimer in solution. Exists as a monomer in solution when a low concentration (0.001 mg/ml) of it is present. Homodimers start to appear at a concentration of 0.01 mg/ml and tetramers at a concentration of 0.1 mg/ml. In terms of tissue distribution, highly expressed in mantle and to a lesser extent in muscle, hepatopancreas, gill and hemocytes.

Its activity is regulated as follows. Bacterial binding activity is inhibited by D-galactose. Hemagglutinating activity is independent of divalent cations Ca2(+) or Mg2(+). It is strongly inhibited by N-acetyl-D-galactosamine (GalNAc), D-galactose and D-talose, and to a lesser extent by melibiose and raffinose. Also inhibited by glycoprotein asialo-bovine submaxillary mucin (BSM). Not inhibited by D-glucose, D-fucose, D-galactitol, N-acetyl-D-glucosamine or lactose. Fungal binding activity is inhibited by D-galactose. Cytotoxic activity against Raji cell line is completely inhibited by galactose, melibiose and raffinose, but not by glucose or lactose. Galactose inhibits binding to laminin and BSM, but not to collagen, gelatin or fibronectin. Galactose-binding lectin. Binds both alpha and beta anomer of galactose (Gal), but has a stronger interaction with the glycans having alpha Gal at the non-reducing end and binds beta Gal weakly only in highly branched glycans. Has high affinity to Galalpha1-4Galbeta1-4GlcNAc. Binds N-acetyl-2-deoxy-2-amino-galactose (2-deoxy-GalNAc). Binds N-acetylgalactosamine (GalNAc). Binds porcine stomach mucin (PSM) with high affinity. Binds galactosamine. Binds laminin, bovine submaxillary mucin (BSM), fibronectin, type I collagen and gelatin with a decreasing affinity, respectively. Has hemagglutinating activity towards human type A erythrocytes. Also hemagglutinates human type 0, B and AB erythrocytes as well as rabbit and mouse erythrocytes. Agglutinates both Gram-positive and Gram-negative bacteria including B.subtilis ATCC 6633, S.aureus ATCC 21027 and E.coli 3254, respectively. No agglutination activity towards Gram-positive S.amurskyense CMM 3673. Has bacteriostatic activity on S.amurskyense CMM 3673, B.subtilis ATCC 6633, S.aureus ATCC 21027 and E.coli 3254. However, has no agglutination nor bacteriostatic activity on Gram-negative C.scophthalmum CIP 104199 or A.troitsensis KMM 3674. Inhibits growth of fungi from the genera Aspergillus, Penicillium, Trichoderma and st. Mycelia. Inhibits germination of spores and hyphal growth of them. Has dose-dependent cytotoxic effect on the human globotriaosylceramide (Gb3)-expressing Burkitt's lymphoma (Raji) cell line. Binds to Gb3 in these cells leading to activation of caspase-9/3 and PARP. Has dose-dependent cytotoxic effect on the Gb3-expressing human MCF-7 breast cancer cell line. No cytotoxic effect on myelogenous leukemia K562 cell line, which does not express Gb3. Activates immune responses in mice and increases cytokine production of TNF-alpha, IL-6 and MCP-1 in the serum and the peritoneal lavage of mice. Induces TNF-alpha and IL-6 secretion in mouse RAW264.7 macrophages, mouse bone marrow-derived macrophages, human THP-1 macrophages, human peripheral blood mononuclear cells (PBMCs) and human blood monocyte-derived macrophages. TNF-alpha production in macrophages could not be inhibited by GalNAc, GalN or Gal, indicating that induced cytokine production is separate from its sugar binding activity. Increases intracellular reactive oxygen species levels, expression and phosphorylation of protein kinases PKC alpha/delta, expression of COX-2 and NF-kappaB, and activates the MAPK pathway by increasing the phosphorylation of ERK1/2, JNK1/2 and p38 in mouse RAW264.7 macrophages. Induces endotoxin tolerance in lipopolysaccharide(LPS)-activated macrophages by down-regulating IRAK2 expression, reducing JNK1/2 phosphorylation and NF-kappaB activation. Can slightly increase the bactericidal activity of RAW264.7 macrophages. Has DNA-binding activity. Recognizes pathogen-associated molecular patterns (PAMPs) and binds to LPS from E.coli, but has only little binding to beta-1,3-glucan from E.gracilis and peptidoglycan from S.aureus. Activates secretion of TNF-alpha and IFN-gamma by the human peripheral blood cells (HPBCs). May be involved in innate immunity acting as an antibacterial and antifungal agent involved in the recognition and clearance of pathogens. This is Galactose-binding lectin from Crenomytilus grayanus (Gray mussel).